Here is a 202-residue protein sequence, read N- to C-terminus: Small ribosomal subunit protein uS4 (202 aa).

The segment at 15–42 (LGDLPGLTRKAAKRSYPPGQHGQARRKR) is disordered. The S4 RNA-binding domain occupies 90-152 (NRLDNVCFRL…KCSKQLAEGN (63 aa)).

It belongs to the universal ribosomal protein uS4 family. In terms of assembly, part of the 30S ribosomal subunit. Contacts protein S5. The interaction surface between S4 and S5 is involved in control of translational fidelity.

Its function is as follows. One of the primary rRNA binding proteins, it binds directly to 16S rRNA where it nucleates assembly of the body of the 30S subunit. Functionally, with S5 and S12 plays an important role in translational accuracy. The chain is Small ribosomal subunit protein uS4 from Synechococcus sp. (strain WH7803).